The sequence spans 297 residues: Phosphoribosylaminoimidazole-succinocarboxamide synthase (297 aa).

This sequence belongs to the SAICAR synthetase family.

It carries out the reaction 5-amino-1-(5-phospho-D-ribosyl)imidazole-4-carboxylate + L-aspartate + ATP = (2S)-2-[5-amino-1-(5-phospho-beta-D-ribosyl)imidazole-4-carboxamido]succinate + ADP + phosphate + 2 H(+). The protein operates within purine metabolism; IMP biosynthesis via de novo pathway; 5-amino-1-(5-phospho-D-ribosyl)imidazole-4-carboxamide from 5-amino-1-(5-phospho-D-ribosyl)imidazole-4-carboxylate: step 1/2. In Mycobacteroides abscessus (strain ATCC 19977 / DSM 44196 / CCUG 20993 / CIP 104536 / JCM 13569 / NCTC 13031 / TMC 1543 / L948) (Mycobacterium abscessus), this protein is Phosphoribosylaminoimidazole-succinocarboxamide synthase.